Here is a 238-residue protein sequence, read N- to C-terminus: Ribonuclease PH (238 aa).

Residues Arg86 and 124–126 each bind phosphate; that span reads GTR.

Belongs to the RNase PH family. In terms of assembly, homohexameric ring arranged as a trimer of dimers.

The enzyme catalyses tRNA(n+1) + phosphate = tRNA(n) + a ribonucleoside 5'-diphosphate. Its function is as follows. Phosphorolytic 3'-5' exoribonuclease that plays an important role in tRNA 3'-end maturation. Removes nucleotide residues following the 3'-CCA terminus of tRNAs; can also add nucleotides to the ends of RNA molecules by using nucleoside diphosphates as substrates, but this may not be physiologically important. Probably plays a role in initiation of 16S rRNA degradation (leading to ribosome degradation) during starvation. The protein is Ribonuclease PH of Vibrio cholerae serotype O1 (strain ATCC 39315 / El Tor Inaba N16961).